The sequence spans 122 residues: Large ribosomal subunit protein uL22 (122 aa).

The protein belongs to the universal ribosomal protein uL22 family. Part of the 50S ribosomal subunit.

Functionally, this protein binds specifically to 23S rRNA; its binding is stimulated by other ribosomal proteins, e.g. L4, L17, and L20. It is important during the early stages of 50S assembly. It makes multiple contacts with different domains of the 23S rRNA in the assembled 50S subunit and ribosome. The globular domain of the protein is located near the polypeptide exit tunnel on the outside of the subunit, while an extended beta-hairpin is found that lines the wall of the exit tunnel in the center of the 70S ribosome. This chain is Large ribosomal subunit protein uL22, found in Caldicellulosiruptor saccharolyticus (strain ATCC 43494 / DSM 8903 / Tp8T 6331).